Consider the following 363-residue polypeptide: Neutral protease 2 homolog MEP7 (363 aa).

A signal peptide spans 1–19; the sequence is MLLCSMVAALAALATPAFS. The propeptide occupies 20–181; sequence CALPHLDLPE…ARAIQPLDRR (162 aa). Intrachain disulfides connect Cys187–Cys259 and Cys266–Cys284. His308 contacts Zn(2+). Glu309 is an active-site residue. Zn(2+)-binding residues include His312 and Asp323.

Belongs to the peptidase M35 family. Zn(2+) serves as cofactor.

The protein resides in the secreted. The catalysed reaction is Preferential cleavage of bonds with hydrophobic residues in P1'. Also 3-Asn-|-Gln-4 and 8-Gly-|-Ser-9 bonds in insulin B chain.. Functionally, secreted metalloproteinase that allows assimilation of proteinaceous substrates. Shows high activities on basic nuclear substrates such as histone and protamine. May be involved in virulence. The protein is Neutral protease 2 homolog MEP7 (MEP7) of Coccidioides posadasii (strain C735) (Valley fever fungus).